Here is a 222-residue protein sequence, read N- to C-terminus: Glutathione S-transferase A4 (222 aa).

M1 is modified (N-acetylmethionine). The GST N-terminal domain maps to 3–83 (TKPKLHYPNG…YIADKHHLFG (81 aa)). Glutathione-binding positions include Y9, 54 to 55 (QV), and 67 to 68 (QT). Positions 85–208 (DLKERTLIDM…EPGSKKKPPP (124 aa)) constitute a GST C-terminal domain.

This sequence belongs to the GST superfamily. Alpha family. In terms of assembly, homodimer.

The protein localises to the cytoplasm. It catalyses the reaction RX + glutathione = an S-substituted glutathione + a halide anion + H(+). Conjugation of reduced glutathione to a wide number of exogenous and endogenous hydrophobic electrophiles. This chain is Glutathione S-transferase A4 (GSTA4), found in Bos taurus (Bovine).